Here is a 1066-residue protein sequence, read N- to C-terminus: Exportin-T (1066 aa).

Belongs to the exportin family.

Its subcellular location is the nucleus. The protein localises to the cytoplasm. Functionally, tRNA nucleus export receptor which facilitates tRNA translocation across the nuclear pore complex. Involved in pre-tRNA splicing, probably by affecting the interaction of pre-tRNA with splicing endonuclease. In Laccaria bicolor (strain S238N-H82 / ATCC MYA-4686) (Bicoloured deceiver), this protein is Exportin-T (LOS1).